We begin with the raw amino-acid sequence, 209 residues long: uncharacterized protein (209 aa).

Residues 13-75 adopt a coiled-coil conformation; the sequence is LSAVDKQMDT…AINLAAVMTD (63 aa). The interval 107–135 is disordered; the sequence is ATPLPSSNTNNEQSMSTYSSSISGKTSET. Over residues 110–119 the composition is skewed to polar residues; that stretch reads LPSSNTNNEQ. Low complexity predominate over residues 120 to 133; it reads SMSTYSSSISGKTS.

Belongs to the asfivirus K205R family.

It localises to the host cytoplasm. In terms of biological role, induces host endoplasmic reticulum stress and consequently activates autophagy and NF-kappa-B signaling pathway. In turn, may induce autophagy-mediated STING1 degradation and innate immune evasion. This is an uncharacterized protein from Ornithodoros (relapsing fever ticks).